The primary structure comprises 229 residues: Heptaprenylglyceryl phosphate synthase (229 aa).

Lysine 12 provides a ligand contact to sn-glycerol 1-phosphate. Mg(2+) is bound by residues aspartate 14 and threonine 40. Residues 159 to 164, glycine 189, and 209 to 210 each bind sn-glycerol 1-phosphate; these read YIEYSG and GN.

Belongs to the GGGP/HepGP synthase family. Group I subfamily. Homodimer. It depends on Mg(2+) as a cofactor.

It catalyses the reaction sn-glycerol 1-phosphate + all-trans-heptaprenyl diphosphate = 3-heptaprenyl-sn-glycero-1-phosphate + diphosphate. The protein operates within membrane lipid metabolism; glycerophospholipid metabolism. Its function is as follows. Prenyltransferase that catalyzes in vivo the transfer of the heptaprenyl moiety of heptaprenyl pyrophosphate (HepPP; 35 carbon atoms) to the C3 hydroxyl of sn-glycerol-1-phosphate (G1P), producing heptaprenylglyceryl phosphate (HepGP). This reaction is an ether-bond-formation step in the biosynthesis of archaea-type G1P-based membrane lipids found in Bacillales. The polypeptide is Heptaprenylglyceryl phosphate synthase (Staphylococcus saprophyticus subsp. saprophyticus (strain ATCC 15305 / DSM 20229 / NCIMB 8711 / NCTC 7292 / S-41)).